Consider the following 211-residue polypeptide: Thiamine-phosphate synthase (211 aa).

Residues 37 to 41 (QLRIK) and Asn69 contribute to the 4-amino-2-methyl-5-(diphosphooxymethyl)pyrimidine site. Mg(2+) contacts are provided by Asp70 and Asp89. Ser108 provides a ligand contact to 4-amino-2-methyl-5-(diphosphooxymethyl)pyrimidine. Position 134 to 136 (134 to 136 (TQT)) interacts with 2-[(2R,5Z)-2-carboxy-4-methylthiazol-5(2H)-ylidene]ethyl phosphate. Residue Lys137 coordinates 4-amino-2-methyl-5-(diphosphooxymethyl)pyrimidine. 2-[(2R,5Z)-2-carboxy-4-methylthiazol-5(2H)-ylidene]ethyl phosphate contacts are provided by residues Gly166 and 186–187 (VS).

It belongs to the thiamine-phosphate synthase family. Requires Mg(2+) as cofactor.

It catalyses the reaction 2-[(2R,5Z)-2-carboxy-4-methylthiazol-5(2H)-ylidene]ethyl phosphate + 4-amino-2-methyl-5-(diphosphooxymethyl)pyrimidine + 2 H(+) = thiamine phosphate + CO2 + diphosphate. The catalysed reaction is 2-(2-carboxy-4-methylthiazol-5-yl)ethyl phosphate + 4-amino-2-methyl-5-(diphosphooxymethyl)pyrimidine + 2 H(+) = thiamine phosphate + CO2 + diphosphate. The enzyme catalyses 4-methyl-5-(2-phosphooxyethyl)-thiazole + 4-amino-2-methyl-5-(diphosphooxymethyl)pyrimidine + H(+) = thiamine phosphate + diphosphate. It participates in cofactor biosynthesis; thiamine diphosphate biosynthesis; thiamine phosphate from 4-amino-2-methyl-5-diphosphomethylpyrimidine and 4-methyl-5-(2-phosphoethyl)-thiazole: step 1/1. In terms of biological role, condenses 4-methyl-5-(beta-hydroxyethyl)thiazole monophosphate (THZ-P) and 2-methyl-4-amino-5-hydroxymethyl pyrimidine pyrophosphate (HMP-PP) to form thiamine monophosphate (TMP). In Salmonella schwarzengrund (strain CVM19633), this protein is Thiamine-phosphate synthase.